Consider the following 388-residue polypeptide: Chorismate synthase (388 aa).

Residues Arg39 and Arg45 each contribute to the NADP(+) site. Residues 132–134 (RSS), 251–252 (NA), Gly296, 311–315 (KPIPT), and Arg337 each bind FMN.

This sequence belongs to the chorismate synthase family. In terms of assembly, homotetramer. The cofactor is FMNH2.

The enzyme catalyses 5-O-(1-carboxyvinyl)-3-phosphoshikimate = chorismate + phosphate. It functions in the pathway metabolic intermediate biosynthesis; chorismate biosynthesis; chorismate from D-erythrose 4-phosphate and phosphoenolpyruvate: step 7/7. In terms of biological role, catalyzes the anti-1,4-elimination of the C-3 phosphate and the C-6 proR hydrogen from 5-enolpyruvylshikimate-3-phosphate (EPSP) to yield chorismate, which is the branch point compound that serves as the starting substrate for the three terminal pathways of aromatic amino acid biosynthesis. This reaction introduces a second double bond into the aromatic ring system. The protein is Chorismate synthase of Staphylococcus aureus (strain MRSA252).